The following is a 460-amino-acid chain: Cysteine--tRNA ligase (460 aa).

C28 serves as a coordination point for Zn(2+). The 'HIGH' region signature appears at 30–40; that stretch reads MTVYDYCHLGH. Zn(2+)-binding residues include C209, H234, and E238. The 'KMSKS' region motif lies at 266–270; that stretch reads KMSKS. K269 lines the ATP pocket.

It belongs to the class-I aminoacyl-tRNA synthetase family. In terms of assembly, monomer. The cofactor is Zn(2+).

Its subcellular location is the cytoplasm. It carries out the reaction tRNA(Cys) + L-cysteine + ATP = L-cysteinyl-tRNA(Cys) + AMP + diphosphate. This chain is Cysteine--tRNA ligase, found in Pseudomonas fluorescens (strain Pf0-1).